The sequence spans 213 residues: Probable nicotinate-nucleotide adenylyltransferase (213 aa).

This sequence belongs to the NadD family.

It catalyses the reaction nicotinate beta-D-ribonucleotide + ATP + H(+) = deamido-NAD(+) + diphosphate. It functions in the pathway cofactor biosynthesis; NAD(+) biosynthesis; deamido-NAD(+) from nicotinate D-ribonucleotide: step 1/1. Catalyzes the reversible adenylation of nicotinate mononucleotide (NaMN) to nicotinic acid adenine dinucleotide (NaAD). This chain is Probable nicotinate-nucleotide adenylyltransferase, found in Escherichia coli O45:K1 (strain S88 / ExPEC).